Consider the following 101-residue polypeptide: Large ribosomal subunit protein bL28 (101 aa).

Belongs to the bacterial ribosomal protein bL28 family.

The protein is Large ribosomal subunit protein bL28 of Rhodopseudomonas palustris (strain BisB18).